The primary structure comprises 427 residues: Glutamate-1-semialdehyde 2,1-aminomutase (427 aa).

Lysine 265 carries the N6-(pyridoxal phosphate)lysine modification.

It belongs to the class-III pyridoxal-phosphate-dependent aminotransferase family. HemL subfamily. As to quaternary structure, homodimer. Pyridoxal 5'-phosphate serves as cofactor.

It localises to the cytoplasm. The catalysed reaction is (S)-4-amino-5-oxopentanoate = 5-aminolevulinate. It functions in the pathway porphyrin-containing compound metabolism; protoporphyrin-IX biosynthesis; 5-aminolevulinate from L-glutamyl-tRNA(Glu): step 2/2. This Burkholderia cenocepacia (strain HI2424) protein is Glutamate-1-semialdehyde 2,1-aminomutase.